A 508-amino-acid chain; its full sequence is 2-isopropylmalate synthase (508 aa).

One can recognise a Pyruvate carboxyltransferase domain in the interval 5–267; that stretch reads IKIFDTTLRD…THRIDTTQIY (263 aa). Positions 14, 202, 204, and 238 each coordinate Mn(2+). The regulatory domain stretch occupies residues 390–508; the sequence is VIDSFQINSG…SEIGESIISQ (119 aa).

This sequence belongs to the alpha-IPM synthase/homocitrate synthase family. LeuA type 1 subfamily. Homodimer. Mn(2+) is required as a cofactor.

Its subcellular location is the cytoplasm. The catalysed reaction is 3-methyl-2-oxobutanoate + acetyl-CoA + H2O = (2S)-2-isopropylmalate + CoA + H(+). The protein operates within amino-acid biosynthesis; L-leucine biosynthesis; L-leucine from 3-methyl-2-oxobutanoate: step 1/4. Catalyzes the condensation of the acetyl group of acetyl-CoA with 3-methyl-2-oxobutanoate (2-ketoisovalerate) to form 3-carboxy-3-hydroxy-4-methylpentanoate (2-isopropylmalate). This is 2-isopropylmalate synthase from Ruminiclostridium cellulolyticum (strain ATCC 35319 / DSM 5812 / JCM 6584 / H10) (Clostridium cellulolyticum).